We begin with the raw amino-acid sequence, 236 residues long: Small ribosomal subunit protein uS2c (236 aa).

This sequence belongs to the universal ribosomal protein uS2 family.

It is found in the plastid. Its subcellular location is the chloroplast. This Barbarea verna (Land cress) protein is Small ribosomal subunit protein uS2c (rps2).